We begin with the raw amino-acid sequence, 391 residues long: Pectate lyase D (391 aa).

A signal peptide spans 1 to 31 (MNNTRVSFRSTKSLLAAIIATSMMTWSVNRA). The Ca(2+) site is built by Asp-170 and Asp-213. Residue Arg-266 is part of the active site.

Belongs to the polysaccharide lyase 1 family. PLBC subfamily. Ca(2+) serves as cofactor.

It is found in the secreted. It catalyses the reaction Eliminative cleavage of (1-&gt;4)-alpha-D-galacturonan to give oligosaccharides with 4-deoxy-alpha-D-galact-4-enuronosyl groups at their non-reducing ends.. Its pathway is glycan metabolism; pectin degradation; 2-dehydro-3-deoxy-D-gluconate from pectin: step 2/5. Functionally, involved in maceration and soft-rotting of plant tissue. This is Pectate lyase D (pelD) from Dickeya chrysanthemi (Pectobacterium chrysanthemi).